A 150-amino-acid polypeptide reads, in one-letter code: Large ribosomal subunit protein bL9 (150 aa).

The protein belongs to the bacterial ribosomal protein bL9 family.

Its function is as follows. Binds to the 23S rRNA. This chain is Large ribosomal subunit protein bL9, found in Corynebacterium glutamicum (strain R).